The chain runs to 186 residues: Vacuolar protein sorting-associated protein 29 (186 aa).

It belongs to the VPS29 family. Component of the commander complex consisting of the CCC subcomplex and the retriever subcomplex. Component of the heterotrimeric retriever complex formed by VPS26C, VPS29 and VPS35L; within the complex interacts with VPS35L. Component of the heterotrimeric retromer cargo-selective complex (CSC), also described as vacuolar protein sorting subcomplex (VPS), formed by VPS26 (VPS26A or VPS26B), VPS29 and VPS35. The CSC has a highly elongated structure with VPS26 and VPS29 binding independently at opposite distal ends of VPS35 as central platform. The CSC is believed to associate with variable sorting nexins to form functionally distinct retromer complex variants. The originally described retromer complex (also called SNX-BAR retromer) is a pentamer containing the CSC and a heterodimeric membrane-deforming subcomplex formed between SNX1 or SNX2 and SNX5 or SNX6 (also called SNX-BAR subcomplex); the respective CSC and SNX-BAR subcomplexes associate with low affinity. The CSC associates with SNX3 to form a SNX3-retromer complex. The CSC associates with SNX27, the WASH complex and the SNX-BAR subcomplex to form the SNX27-retromer complex. Interacts with VPS26A, VPS35, SNX1, SNX2, SNX3, SNX27, WASHC5. Interacts with TBC1D5; this interaction is blocked by VPS35L in the retriever complex. Interacts with SNX17; the interaction is indirect; SNX17 (via its C-terminus) interacts with the retriever complex (via VPS26C and VPS35L). Interacts with VPS26B and ANKRD27.

The protein localises to the cytoplasm. The protein resides in the membrane. It is found in the endosome membrane. Its function is as follows. Component of the commander complex that is essential for endosomal recycling of transmembrane cargos; the commander complex is composed of the CCC subcomplex and the retriever subcomplex. Component of the retriever complex, which is a heterotrimeric complex related to retromer cargo-selective complex (CSC) and essential for retromer-independent retrieval and recycling of numerous cargos such as integrin alpha-5/beta-1 (ITGA5:ITGB1). Component of the retromer cargo-selective complex (CSC). The CSC is believed to be the core functional component of retromer or respective retromer complex variants acting to prevent missorting of selected transmembrane cargo proteins into the lysosomal degradation pathway. The recruitment of the CSC to the endosomal membrane involves RAB7A and SNX3. The SNX-BAR retromer mediates retrograde transport of cargo proteins from endosomes to the trans-Golgi network (TGN) and is involved in endosome-to-plasma membrane transport for cargo protein recycling. The SNX3-retromer mediates the retrograde endosome-to-TGN transport of WLS distinct from the SNX-BAR retromer pathway. The SNX27-retromer is believed to be involved in endosome-to-plasma membrane trafficking and recycling of a broad spectrum of cargo proteins. The CSC seems to act as recruitment hub for other proteins, such as the WASH complex and TBC1D5. Required to regulate transcytosis of the polymeric immunoglobulin receptor (pIgR-pIgA). In the endosomes, retriever complex drives the retrieval and recycling of NxxY-motif-containing cargo proteins by coupling to SNX17, a cargo essential for the homeostatic maintenance of numerous cell surface proteins associated with processes that include cell migration, cell adhesion, nutrient supply and cell signaling. The recruitment of the retriever complex to the endosomal membrane involves CCC and WASH complexes. Involved in GLUT1 endosome-to-plasma membrane trafficking; the function is dependent of association with ANKRD27. This Gallus gallus (Chicken) protein is Vacuolar protein sorting-associated protein 29 (VPS29).